The primary structure comprises 137 residues: uncharacterized protein (137 aa).

A helical transmembrane segment spans residues 111-131 (LAVGVLVGSNLVVGSLVFALL).

Its subcellular location is the membrane. This is an uncharacterized protein from Saccharomyces cerevisiae (strain ATCC 204508 / S288c) (Baker's yeast).